A 150-amino-acid polypeptide reads, in one-letter code: Flagellar assembly factor FliW (150 aa).

This sequence belongs to the FliW family. Interacts with translational regulator CsrA and flagellin(s).

It localises to the cytoplasm. Acts as an anti-CsrA protein, binds CsrA and prevents it from repressing translation of its target genes, one of which is flagellin. Binds to flagellin and participates in the assembly of the flagellum. The chain is Flagellar assembly factor FliW from Leptospira borgpetersenii serovar Hardjo-bovis (strain L550).